The chain runs to 311 residues: Protoheme IX farnesyltransferase (311 aa).

9 helical membrane-spanning segments follow: residues 33–53 (VVML…PSPA), 55–75 (LWLL…AAAV), 104–124 (NALL…SSFI), 127–147 (LTAW…TLFL), 155–175 (IVIG…AVTG), 181–201 (GLLL…ALAL), 228–248 (IVLY…TRMM), 252–272 (YLVG…KLLV), and 287–307 (IIYL…FPIP).

This sequence belongs to the UbiA prenyltransferase family. Protoheme IX farnesyltransferase subfamily.

The protein resides in the cell inner membrane. It catalyses the reaction heme b + (2E,6E)-farnesyl diphosphate + H2O = Fe(II)-heme o + diphosphate. The protein operates within porphyrin-containing compound metabolism; heme O biosynthesis; heme O from protoheme: step 1/1. Converts heme B (protoheme IX) to heme O by substitution of the vinyl group on carbon 2 of heme B porphyrin ring with a hydroxyethyl farnesyl side group. The protein is Protoheme IX farnesyltransferase of Teredinibacter turnerae (strain ATCC 39867 / T7901).